A 105-amino-acid polypeptide reads, in one-letter code: Heat shock protein HspQ (105 aa).

The interval serine 74 to asparagine 105 is disordered.

The protein belongs to the HspQ family.

It localises to the cytoplasm. In terms of biological role, involved in the degradation of certain denaturated proteins, including DnaA, during heat shock stress. In Citrobacter koseri (strain ATCC BAA-895 / CDC 4225-83 / SGSC4696), this protein is Heat shock protein HspQ.